Consider the following 147-residue polypeptide: RxLR effector protein Avr3a (147 aa).

The first 21 residues, 1-21 (MRLAIMLSATAVAINFATCSA), serve as a signal peptide directing secretion. The RxLR-dEER signature appears at 44–59 (RLLRKNEENEETSEER). Lys48 is modified (N6-acetyllysine). The tract at residues 77 to 147 (ALTKRADAKK…YMMHLGLTGY (71 aa)) is effector domain.

This sequence belongs to the RxLR effector family. Forms homodimers via the RxLR-dEER motif. Interacts with host E3 ligase CMPG1. Interacts with host DRP2. In terms of processing, proteolytically cleaved. The cleavage site directly after the RxLR sequence and the high conservation among other effector proteins suggest that the RxLR motif might play a crucial role in the intracellular processing before secretion. Glycosylated. Post-translationally, N-acetylated at Lys-48 after cleavage.

Its subcellular location is the secreted. It localises to the host cytoplasm. The protein resides in the host endosome. Its function is as follows. Multifunctional effector that can suppress host BAK1/SERK3-mediated immunity through at least two different pathways. Manipulates plant immunity by targeting and stabilizing host E3 ligase CMPG1. Preventing the normal 26S proteasome-dependent degradation of potato CMPG1, and thus potentially of its protein substrates in the host cell, further abolishes host cell death during the biotrophic phase of infection. Also associates with the dynamin-related protein 2 (DRP2), a plant GTPase involved in immune receptor-mediated endocytosis. The Avr3A(KI) form is recognized by R3a which triggers R3a-mediated hypersensitivity and suppresses INF1-induced cell death. In Phytophthora infestans (Potato late blight agent), this protein is RxLR effector protein Avr3a.